Here is a 149-residue protein sequence, read N- to C-terminus: Peptide deformylase (149 aa).

Fe cation contacts are provided by cysteine 92 and histidine 134. Glutamate 135 is a catalytic residue. Position 138 (histidine 138) interacts with Fe cation.

Belongs to the polypeptide deformylase family. It depends on Fe(2+) as a cofactor.

It catalyses the reaction N-terminal N-formyl-L-methionyl-[peptide] + H2O = N-terminal L-methionyl-[peptide] + formate. Removes the formyl group from the N-terminal Met of newly synthesized proteins. Requires at least a dipeptide for an efficient rate of reaction. N-terminal L-methionine is a prerequisite for activity but the enzyme has broad specificity at other positions. The polypeptide is Peptide deformylase (Buchnera aphidicola subsp. Cinara cedri (strain Cc)).